Here is a 78-residue protein sequence, read N- to C-terminus: Acyl carrier protein (78 aa).

In terms of domain architecture, Carrier spans 1-76 (MALFEDIQAV…DVVKYIEDNK (76 aa)). At serine 36 the chain carries O-(pantetheine 4'-phosphoryl)serine.

The protein belongs to the acyl carrier protein (ACP) family. Post-translationally, 4'-phosphopantetheine is transferred from CoA to a specific serine of apo-ACP by AcpS. This modification is essential for activity because fatty acids are bound in thioester linkage to the sulfhydryl of the prosthetic group.

It is found in the cytoplasm. It participates in lipid metabolism; fatty acid biosynthesis. Its function is as follows. Carrier of the growing fatty acid chain in fatty acid biosynthesis. This is Acyl carrier protein from Helicobacter pylori (strain ATCC 700392 / 26695) (Campylobacter pylori).